Consider the following 447-residue polypeptide: tRNA modification GTPase MnmE (447 aa).

(6S)-5-formyl-5,6,7,8-tetrahydrofolate-binding residues include R22, E81, and K121. A TrmE-type G domain is found at 217-373 (GIVLAITGET…LMSEIVSYAE (157 aa)). N227 is a K(+) binding site. GTP is bound by residues 227 to 232 (NTGKSS), 246 to 252 (SDIPGTT), and 271 to 274 (DTAG). S231 serves as a coordination point for Mg(2+). 3 residues coordinate K(+): S246, I248, and T251. A Mg(2+)-binding site is contributed by T252. K447 contacts (6S)-5-formyl-5,6,7,8-tetrahydrofolate.

It belongs to the TRAFAC class TrmE-Era-EngA-EngB-Septin-like GTPase superfamily. TrmE GTPase family. Homodimer. Heterotetramer of two MnmE and two MnmG subunits. K(+) is required as a cofactor.

Its subcellular location is the cytoplasm. Functionally, exhibits a very high intrinsic GTPase hydrolysis rate. Involved in the addition of a carboxymethylaminomethyl (cmnm) group at the wobble position (U34) of certain tRNAs, forming tRNA-cmnm(5)s(2)U34. The protein is tRNA modification GTPase MnmE of Orientia tsutsugamushi (strain Boryong) (Rickettsia tsutsugamushi).